The following is a 23-amino-acid chain: Coenzyme PQQ synthesis protein A (23 aa).

Positions 15 to 19 (EVTMY) form a cross-link, pyrroloquinoline quinone (Glu-Tyr).

This sequence belongs to the PqqA family.

It participates in cofactor biosynthesis; pyrroloquinoline quinone biosynthesis. Functionally, required for coenzyme pyrroloquinoline quinone (PQQ) biosynthesis. PQQ is probably formed by cross-linking a specific glutamate to a specific tyrosine residue and excising these residues from the peptide. This Pseudomonas putida (strain W619) protein is Coenzyme PQQ synthesis protein A.